A 154-amino-acid chain; its full sequence is Protein X (154 aa).

Residues Pro68–Phe117 are mitochondrial targeting sequence.

Belongs to the orthohepadnavirus protein X family. May form homodimer. May interact with host CEBPA, CFLAR, CREB1, DDB1, E4F1, HBXIP, HSPD1/HSP60, NFKBIA, POLR2E and SMAD4. Interacts with host SMC5-SMC6 complex and induces its degradation. Interacts with host TRPC4AP; leading to prevent ubiquitination of TRPC4AP. Interacts with host PLSCR1; this interaction promotes ubiquitination and degradation of HBx and impairs HBx-mediated cell proliferation. In terms of processing, a fraction may be phosphorylated in insect cells and HepG2 cells, a human hepatoblastoma cell line. Phosphorylated in vitro by host protein kinase C or mitogen-activated protein kinase. N-acetylated in insect cells.

The protein resides in the host cytoplasm. Its subcellular location is the host nucleus. It is found in the host mitochondrion. Functionally, multifunctional protein that plays a role in silencing host antiviral defenses and promoting viral transcription. Does not seem to be essential for HBV infection. May be directly involved in development of cirrhosis and liver cancer (hepatocellular carcinoma). Most of cytosolic activities involve modulation of cytosolic calcium. The effect on apoptosis is controversial depending on the cell types in which the studies have been conducted. May induce apoptosis by localizing in mitochondria and causing loss of mitochondrial membrane potential. May also modulate apoptosis by binding host CFLAR, a key regulator of the death-inducing signaling complex (DISC). Promotes viral transcription by using the host E3 ubiquitin ligase DDB1 to target the SMC5-SMC6 complex to proteasomal degradation. This host complex would otherwise bind to viral episomal DNA, and prevents its transcription. Moderately stimulates transcription of many different viral and cellular transcription elements. Promoters and enhancers stimulated by HBx contain DNA binding sites for NF-kappa-B, AP-1, AP-2, c-EBP, ATF/CREB, or the calcium-activated factor NF-AT. The protein is Protein X of Hepatitis B virus genotype E (isolate Chimpanzee/Ch195/1999) (HBV-E).